The primary structure comprises 343 residues: Inositol 2-dehydrogenase 1 (343 aa).

Belongs to the Gfo/Idh/MocA family. As to quaternary structure, homotetramer.

The catalysed reaction is myo-inositol + NAD(+) = scyllo-inosose + NADH + H(+). Functionally, involved in the oxidation of myo-inositol (MI) to 2-keto-myo-inositol (2KMI or 2-inosose). The polypeptide is Inositol 2-dehydrogenase 1 (Mycolicibacterium vanbaalenii (strain DSM 7251 / JCM 13017 / BCRC 16820 / KCTC 9966 / NRRL B-24157 / PYR-1) (Mycobacterium vanbaalenii)).